The following is a 498-amino-acid chain: MASQGTKRSYEQMETGGERQNATEIRASVGRMVGGIGRFYIQMCTELKLSDYEGRLIQNSITIERMVLSAFDERRNKYLEEHPSAGKDPKKTGGPIYRRRDGKWMRELILYDKEEIRRIWRQANNGEDATAGLTHLMIWHSNLNDATYQRTRALVRTGMDPRMCSLMQGSTLPRRSGAAGAAVKGIGTMVMELIRMIKRGINDRNFWRGENGRRTRVAYERMCNILKGKFQTAAQRAMMDQVRESRNPGNAEIEDLIFLARSALILRGSVAHKSCLPACVYGLAVASGYDFEREGYSLVGIDPFRLLQNSQVFSLIRPNENPAHKSQLVWMACHSAAFEDLRVSSFIRGTRVVPRGQLSTRGVQIASNENMETMDSSTLELRSRYWAIRTRSGGNTNQQRASAGQISVQPTFSVQRNLPFERATIMAAFTGNTEGRTSDMRTEIIRMMESARPEDVSFQGRGVFELSDEKATNPIVPSFDMSNEGSYFFGDNAEEYDN.

The Unconventional nuclear localization signal signature appears at 1-18 (MASQGTKRSYEQMETGGE). The tract at residues 1–21 (MASQGTKRSYEQMETGGERQN) is disordered. Residues 198 to 216 (KRGINDRNFWRGENGRRTR) carry the Bipartite nuclear localization signal motif.

This sequence belongs to the influenza viruses nucleoprotein family. Homomultimerizes to form the nucleocapsid. May bind host exportin-1/XPO1. Binds to viral genomic RNA. Protein-RNA contacts are mediated by a combination of electrostatic interactions between positively charged residues and the phosphate backbone and planar interactions between aromatic side chains and bases. In terms of processing, late in virus-infected cells, may be cleaved from a 56-kDa protein to a 53-kDa protein by a cellular caspase. This cleavage might be a marker for the onset of apoptosis in infected cells or have a specific function in virus host interaction.

Its subcellular location is the virion. The protein resides in the host nucleus. Encapsidates the negative strand viral RNA, protecting it from nucleases. The encapsidated genomic RNA is termed the ribonucleoprotein (RNP) and serves as template for transcription and replication. The RNP needs to be localized in the host nucleus to start an infectious cycle, but is too large to diffuse through the nuclear pore complex. NP comprises at least 2 nuclear localization signals that are responsible for the active RNP import into the nucleus through cellular importin alpha/beta pathway. Later in the infection, nclear export of RNPs are mediated through viral proteins NEP interacting with M1 which binds nucleoproteins. It is possible that nucleoprotein binds directly host exportin-1/XPO1 and plays an active role in RNPs nuclear export. M1 interaction with RNP seems to hide nucleoprotein's nuclear localization signals. Soon after a virion infects a new cell, M1 dissociates from the RNP under acidification of the virion driven by M2 protein. Dissociation of M1 from RNP unmasks nucleoprotein's nuclear localization signals, targeting the RNP to the nucleus. The polypeptide is Nucleoprotein (Aves).